Reading from the N-terminus, the 285-residue chain is Protease HtpX homolog (285 aa).

Transmembrane regions (helical) follow at residues 7 to 27 (TAML…MIGG) and 30 to 50 (GMTI…WFSD). His-131 contributes to the Zn(2+) binding site. Glu-132 is a catalytic residue. His-135 is a Zn(2+) binding site. 2 helical membrane passes run 146–166 (ITAT…FFGG) and 177–197 (IAGI…QMAI). Glu-202 is a binding site for Zn(2+).

It belongs to the peptidase M48B family. The cofactor is Zn(2+).

It is found in the cell inner membrane. This Burkholderia cenocepacia (strain ATCC BAA-245 / DSM 16553 / LMG 16656 / NCTC 13227 / J2315 / CF5610) (Burkholderia cepacia (strain J2315)) protein is Protease HtpX homolog.